The primary structure comprises 279 residues: Acyl-[acyl-carrier-protein]--UDP-N-acetylglucosamine O-acyltransferase (279 aa).

The interval isoleucine 256–serine 279 is disordered.

The protein belongs to the transferase hexapeptide repeat family. LpxA subfamily. In terms of assembly, homotrimer.

The protein localises to the cytoplasm. The catalysed reaction is a (3R)-hydroxyacyl-[ACP] + UDP-N-acetyl-alpha-D-glucosamine = a UDP-3-O-[(3R)-3-hydroxyacyl]-N-acetyl-alpha-D-glucosamine + holo-[ACP]. It participates in glycolipid biosynthesis; lipid IV(A) biosynthesis; lipid IV(A) from (3R)-3-hydroxytetradecanoyl-[acyl-carrier-protein] and UDP-N-acetyl-alpha-D-glucosamine: step 1/6. In terms of biological role, involved in the biosynthesis of lipid A, a phosphorylated glycolipid that anchors the lipopolysaccharide to the outer membrane of the cell. This chain is Acyl-[acyl-carrier-protein]--UDP-N-acetylglucosamine O-acyltransferase, found in Chlamydia caviae (strain ATCC VR-813 / DSM 19441 / 03DC25 / GPIC) (Chlamydophila caviae).